A 238-amino-acid polypeptide reads, in one-letter code: Ribitol-5-phosphate cytidylyltransferase (238 aa).

Residues L7–G10 and G81–T87 contribute to the CTP site.

The protein belongs to the IspD/TarI cytidylyltransferase family. TarI subfamily.

It carries out the reaction D-ribitol 5-phosphate + CTP + H(+) = CDP-L-ribitol + diphosphate. The protein operates within cell wall biogenesis; poly(ribitol phosphate) teichoic acid biosynthesis. Its function is as follows. Catalyzes the transfer of the cytidylyl group of CTP to D-ribitol 5-phosphate. This is Ribitol-5-phosphate cytidylyltransferase from Staphylococcus epidermidis (strain ATCC 35984 / DSM 28319 / BCRC 17069 / CCUG 31568 / BM 3577 / RP62A).